Here is a 538-residue protein sequence, read N- to C-terminus: Bifunctional purine biosynthesis protein PurH (538 aa).

In terms of domain architecture, MGS-like spans 8–158 (IPAPDKVEIK…KNHAYVTILT (151 aa)).

It belongs to the PurH family.

The enzyme catalyses (6R)-10-formyltetrahydrofolate + 5-amino-1-(5-phospho-beta-D-ribosyl)imidazole-4-carboxamide = 5-formamido-1-(5-phospho-D-ribosyl)imidazole-4-carboxamide + (6S)-5,6,7,8-tetrahydrofolate. The catalysed reaction is IMP + H2O = 5-formamido-1-(5-phospho-D-ribosyl)imidazole-4-carboxamide. The protein operates within purine metabolism; IMP biosynthesis via de novo pathway; 5-formamido-1-(5-phospho-D-ribosyl)imidazole-4-carboxamide from 5-amino-1-(5-phospho-D-ribosyl)imidazole-4-carboxamide (10-formyl THF route): step 1/1. Its pathway is purine metabolism; IMP biosynthesis via de novo pathway; IMP from 5-formamido-1-(5-phospho-D-ribosyl)imidazole-4-carboxamide: step 1/1. This Rhizobium etli (strain ATCC 51251 / DSM 11541 / JCM 21823 / NBRC 15573 / CFN 42) protein is Bifunctional purine biosynthesis protein PurH.